The primary structure comprises 532 residues: MPAARVEYIAPWWVVWLHSVPHLGLRLQRVDSTFSPGDETYQESLLFLGVLAAIGLGLNLIFLTVYLVCTCCCRRDHTVQTKQQESCCVTWTAVVAGLLCCAAVGVGFYGNSETNDGMHQLIYSLDNANHTFSGMDELVSANTQRMKVDLEQHLARLSEIIAARGDYIQTLKFMQQMAGNVVSQLSGLPVWREVTTQLTKLSHQTAYVEYYRWLSYLLLFILDLVICLVTCLGLARRSKCLLASMLCCGILTLILSWASLAADAAAAVGTSDFCMAPDIYILNNTGSQINSEVTRYYLHCSQSLISPFQQSLTTFQRSLTTMQIQVGGLLQFAVPLFPTAEKDLLGIQLLLNNSEISLHQLTAMLDCRGLHKDYLDALTGICYDGIEGLLFLGLFSLLAALAFSTLTCAGPRAWKYFINRDRDYDDIDDDDPFNPQARRIAAHNPTRGQLHSFCSYSSGLGSQCSLQPPSQTISNAPVSEYMNQAILFGGNPRYENVPLIGRGSPPPTYSPSMRPTYMSVADEHLRHYEFPS.

The Extracellular segment spans residues 1 to 44 (MPAARVEYIAPWWVVWLHSVPHLGLRLQRVDSTFSPGDETYQES). A helical membrane pass occupies residues 45-65 (LLFLGVLAAIGLGLNLIFLTV). Over 66–87 (YLVCTCCCRRDHTVQTKQQESC) the chain is Cytoplasmic. A helical transmembrane segment spans residues 88–108 (CVTWTAVVAGLLCCAAVGVGF). Topologically, residues 109–213 (YGNSETNDGM…QTAYVEYYRW (105 aa)) are extracellular. Glutamate 113 and aspartate 116 together coordinate Ca(2+). A glycan (N-linked (GlcNAc...) asparagine) is linked at asparagine 129. The RGD signature appears at 164–166 (RGD). Threonine 199 is subject to Phosphothreonine. Residues 214-234 (LSYLLLFILDLVICLVTCLGL) traverse the membrane as a helical segment. The Cytoplasmic portion of the chain corresponds to 235-240 (ARRSKC). A helical membrane pass occupies residues 241 to 261 (LLASMLCCGILTLILSWASLA). Residues 262 to 385 (ADAAAAVGTS…DALTGICYDG (124 aa)) lie on the Extracellular side of the membrane. Cystine bridges form between cysteine 274/cysteine 382 and cysteine 300/cysteine 367. Asparagine 283 and asparagine 352 each carry an N-linked (GlcNAc...) asparagine glycan. Residues 386-406 (IEGLLFLGLFSLLAALAFSTL) form a helical membrane-spanning segment. Residues 407-532 (TCAGPRAWKY…EHLRHYEFPS (126 aa)) lie on the Cytoplasmic side of the membrane. Position 504 is a phosphoserine (serine 504). The PY-motif; mediates interaction with NEDD4L signature appears at 506–509 (PPTY).

Belongs to the tweety family. In terms of assembly, forms cis-homodimers in the presence of Ca(+2) and forms monomers and trans-dimers in the absence of Ca(2+). Interacts with NEDD4L. Post-translationally, ubiquitinated by NEDD4L, leading to its proteasomal degradation.

The protein resides in the cell membrane. The enzyme catalyses chloride(in) = chloride(out). It carries out the reaction L-glutamate(out) = L-glutamate(in). Its activity is regulated as follows. Inhibited by (4-[(2-butyl-6,7-dichloro-2- cyclopentyl-2,3-dihydro-1-oxo-1H-inden-5-yl)oxy]butanoic acid). Its function is as follows. Calcium-independent, swelling-dependent volume-regulated anion channel (VRAC-swell) which plays a pivotal role in the process of regulatory volume decrease (RVD) in the brain through the efflux of anions like chloride and organic osmolytes like glutamate. Probable large-conductance Ca(2+)-activated chloride channel. The sequence is that of Protein tweety homolog 2 (Ttyh2) from Mus musculus (Mouse).